Reading from the N-terminus, the 326-residue chain is Malate dehydrogenase (326 aa).

11–17 (GAAGQIG) lines the NAD(+) pocket. Substrate is bound by residues arginine 92 and arginine 98. NAD(+) is bound by residues asparagine 105, glutamine 112, and 129-131 (VGN). Positions 131 and 162 each coordinate substrate. The Proton acceptor role is filled by histidine 187.

It belongs to the LDH/MDH superfamily. MDH type 2 family.

It carries out the reaction (S)-malate + NAD(+) = oxaloacetate + NADH + H(+). Functionally, catalyzes the reversible oxidation of malate to oxaloacetate. This chain is Malate dehydrogenase, found in Alkalilimnicola ehrlichii (strain ATCC BAA-1101 / DSM 17681 / MLHE-1).